A 325-amino-acid chain; its full sequence is Heat-inducible transcription repressor HrcA (325 aa).

This sequence belongs to the HrcA family.

Its function is as follows. Negative regulator of class I heat shock genes (grpE-dnaK-dnaJ and groELS operons). Prevents heat-shock induction of these operons. The sequence is that of Heat-inducible transcription repressor HrcA from Staphylococcus aureus (strain USA300).